The following is a 464-amino-acid chain: Mitogen-activated protein kinase 10 (464 aa).

Residues 64 to 359 (YQNLKPIGSG…VDDALQHPYI (296 aa)) enclose the Protein kinase domain. ATP contacts are provided by residues 70 to 78 (IGSGAQGIV) and lysine 93. The active-site Proton acceptor is the aspartate 189. Position 221 is a phosphothreonine; by MAP2K7 (threonine 221). Positions 221-223 (TPY) match the TXY motif. Tyrosine 223 carries the post-translational modification Phosphotyrosine; by MAP2K4. The interval 405–464 (TKNGVVKSQPSPSGAAVNSSESLPPSSAVNDISSMSTDQTLASDTDSSLEASAGPLGCCR) is disordered. The span at 410–454 (VKSQPSPSGAAVNSSESLPPSSAVNDISSMSTDQTLASDTDSSLE) shows a compositional bias: polar residues. S-palmitoyl cysteine attachment occurs at residues cysteine 462 and cysteine 463.

The protein belongs to the protein kinase superfamily. CMGC Ser/Thr protein kinase family. MAP kinase subfamily. As to quaternary structure, interacts with MAPK8IP1/JIP-1, MAPK8IP3/JIP-3/JSAP1 and SPAG9/MAPK8IP4/JIP4. Interacts with HDAC9 and MAPKBP1. Interacts with ARRB2; the interaction enhances MAPK10 activation by MAP3K5. Interacts with SARM1. Interacts with JUND; interaction is inhibited in the presence of MEN1. It depends on Mg(2+) as a cofactor. Dually phosphorylated on Thr-221 and Tyr-223 by MAP2K4 and MAP2K7, which activates the enzyme. MAP2K7 shows a strong preference for Thr-221 while MAP2K4 phosphorylates Tyr-223 preferentially. Weakly autophosphorylated on threonine and tyrosine residues in vitro. In terms of processing, palmitoylation regulates subcellular location and axonal development. As to expression, brain (at protein level). Expressed specifically in neurons of the hippocampus, cortex, cerebellum, brainstem, and spinal cord. Seems to be also found in testis, and very weakly in the heart.

The protein localises to the cytoplasm. It is found in the membrane. It localises to the nucleus. Its subcellular location is the mitochondrion. The catalysed reaction is L-seryl-[protein] + ATP = O-phospho-L-seryl-[protein] + ADP + H(+). It carries out the reaction L-threonyl-[protein] + ATP = O-phospho-L-threonyl-[protein] + ADP + H(+). With respect to regulation, activated by threonine and tyrosine phosphorylation by two dual specificity kinases, MAP2K4 and MAP2K7. MAP2K7 phosphorylates MAPK10 on Thr-221 causing a conformational change and a large increase in Vmax for the enzyme. MAP2K4 then phosphorylates Tyr-223 resulting in a further increase in Vmax. Inhibited by dual specificity phosphatases, such as DUSP1. Inhibited by HDAC9. Its function is as follows. Serine/threonine-protein kinase involved in various processes such as neuronal proliferation, differentiation, migration and programmed cell death. Extracellular stimuli such as pro-inflammatory cytokines or physical stress stimulate the stress-activated protein kinase/c-Jun N-terminal kinase (SAP/JNK) signaling pathway. In this cascade, two dual specificity kinases MAP2K4/MKK4 and MAP2K7/MKK7 phosphorylate and activate MAPK10/JNK3. In turn, MAPK10/JNK3 phosphorylates a number of transcription factors, primarily components of AP-1 such as JUN and ATF2 and thus regulates AP-1 transcriptional activity. Plays regulatory roles in the signaling pathways during neuronal apoptosis. Phosphorylates the neuronal microtubule regulator STMN2. Acts in the regulation of the amyloid-beta precursor protein/APP signaling during neuronal differentiation by phosphorylating APP. Also participates in neurite growth in spiral ganglion neurons. Phosphorylates the CLOCK-BMAL1 heterodimer and plays a role in the photic regulation of the circadian clock. Phosphorylates JUND and this phosphorylation is inhibited in the presence of MEN1. This Mus musculus (Mouse) protein is Mitogen-activated protein kinase 10 (Mapk10).